A 1856-amino-acid chain; its full sequence is Protein TANC1 (1856 aa).

Position 1 is an N-acetylmethionine (methionine 1). Disordered stretches follow at residues 1-45 (MLKA…LSTT), 58-130 (SMSL…SCSP), 203-222 (KSPC…KDSG), 262-296 (RADN…PVPY), and 437-489 (IASS…RPRE). Residues 8–21 (KSREGGKGSKKEAG) show a composition bias toward basic and acidic residues. Positions 29–45 (PALSSSGDSPVNSLSTT) are enriched in polar residues. Phosphoserine occurs at positions 60, 63, 64, 204, 267, and 462. A compositionally biased stretch (low complexity) spans 60 to 77 (SLPSSPLLPRQSLLTQSR). Residues 203-216 (KSPCETISSPSSTL) show a composition bias toward polar residues. The span at 439 to 475 (SSSPSLSPKSSDPTQDLPGTPLLSPSSSTSALSVTRT) shows a compositional bias: low complexity. ANK repeat units follow at residues 893-925 (EGLS…NVNY), 931-960 (NNAP…CLDG), 964-993 (NGMN…RVDH), 997-1026 (KGQC…SAGP), 1037-1066 (ALQQ…EHEI), 1075-1104 (WGET…AVSR), 1108-1137 (RGVP…DVNL), 1141-1170 (QGRT…ALSS), 1174-1203 (EGLS…EIDQ), 1207-1236 (NGRT…VIEH), and 1240-1269 (SGMR…KLGN). 3 TPR repeats span residues 1286–1319 (LQKL…FPRE), 1333–1366 (VSLY…KPKS), and 1368–1400 (EAFY…CPNN). The span at 1417–1426 (LQRNQQQKQQ) shows a compositional bias: low complexity. Disordered regions lie at residues 1417-1597 (LQRN…FGDR), 1636-1720 (DMAP…NTPF), and 1832-1856 (HVST…ESNV). 2 positions are modified to phosphoserine: serine 1436 and serine 1463. Acidic residues predominate over residues 1454 to 1463 (EEAEEEDTSS). Composition is skewed to polar residues over residues 1490–1505 (EGLQ…QSRA) and 1524–1556 (PTKQ…VSSQ). Over residues 1656–1686 (SLSSSGSSGSPSSSIKMSSSTSSLTSSSSVS) the composition is skewed to low complexity. 3 positions are modified to phosphoserine: serine 1665, serine 1673, and serine 1674.

This sequence belongs to the TANC family. Interacts probably directly with DLG1, DLG4, HOMER1. Interacts with DLGAP1, INA, CAMK2A, GRIN2B and GRIA1. Interacts with TNIK and MINK1. Phosphorylated; by MINK1 and TNIK upon stimulation by RAP2A.

Its subcellular location is the postsynaptic density. May be a scaffold component in the postsynaptic density. In Mus musculus (Mouse), this protein is Protein TANC1 (Tanc1).